A 544-amino-acid chain; its full sequence is pH-responsive protein 2 (544 aa).

The N-terminal stretch at 1 to 22 (MLLKSLFPSILAATSFVSSVAA) is a signal peptide. Asn40 and Asn59 each carry an N-linked (GlcNAc...) asparagine glycan. An intrachain disulfide couples Cys72 to Cys101. N-linked (GlcNAc...) asparagine glycosylation is present at Asn147. Cystine bridges form between Cys214–Cys347, Cys232–Cys263, Cys369–Cys420, Cys378–Cys444, and Cys397–Cys402. An N-linked (GlcNAc...) asparagine glycan is attached at Asn408. The disordered stretch occupies residues 469–514 (GSSGLGTVSGTVRTDTSQSTSDSGSGSSSSSSSSSSSSSSGSSGSK). Residue Ser515 is the site of GPI-anchor amidated serine attachment. The propeptide at 516-544 (AASIVSVNLLTKIATIGISIVVGFGLITM) is removed in mature form.

It belongs to the glycosyl hydrolase 72 family.

The protein localises to the cell membrane. Required for apical cell growth and plays an essential role in morphogenesis. May be integral to the pathogenic ability of the organism. The chain is pH-responsive protein 2 (PHR2) from Candida albicans (strain SC5314 / ATCC MYA-2876) (Yeast).